The sequence spans 203 residues: Guanylate kinase (203 aa).

The region spanning 3 to 181 (GTLYIVAAPS…AVSEMCAIFT (179 aa)) is the Guanylate kinase-like domain. 10-17 (APSGAGKS) contributes to the ATP binding site.

Belongs to the guanylate kinase family.

The protein localises to the cytoplasm. The enzyme catalyses GMP + ATP = GDP + ADP. Essential for recycling GMP and indirectly, cGMP. In Xanthomonas campestris pv. campestris (strain 8004), this protein is Guanylate kinase.